Here is a 274-residue protein sequence, read N- to C-terminus: Dermonecrotic toxin LspiSicTox-betaIII2 (274 aa).

Residue His5 is part of the active site. Residues Glu25 and Asp27 each contribute to the Mg(2+) site. His41 (nucleophile) is an active-site residue. Disulfide bonds link Cys45–Cys51 and Cys47–Cys189. Residue Asp85 coordinates Mg(2+).

The protein belongs to the arthropod phospholipase D family. Class II subfamily. Mg(2+) serves as cofactor. Expressed by the venom gland.

It is found in the secreted. The catalysed reaction is an N-(acyl)-sphingosylphosphocholine = an N-(acyl)-sphingosyl-1,3-cyclic phosphate + choline. The enzyme catalyses an N-(acyl)-sphingosylphosphoethanolamine = an N-(acyl)-sphingosyl-1,3-cyclic phosphate + ethanolamine. It catalyses the reaction a 1-acyl-sn-glycero-3-phosphocholine = a 1-acyl-sn-glycero-2,3-cyclic phosphate + choline. It carries out the reaction a 1-acyl-sn-glycero-3-phosphoethanolamine = a 1-acyl-sn-glycero-2,3-cyclic phosphate + ethanolamine. Its function is as follows. Dermonecrotic toxins cleave the phosphodiester linkage between the phosphate and headgroup of certain phospholipids (sphingolipid and lysolipid substrates), forming an alcohol (often choline) and a cyclic phosphate. This toxin acts on sphingomyelin (SM). It may also act on ceramide phosphoethanolamine (CPE), lysophosphatidylcholine (LPC) and lysophosphatidylethanolamine (LPE), but not on lysophosphatidylserine (LPS), and lysophosphatidylglycerol (LPG). It acts by transphosphatidylation, releasing exclusively cyclic phosphate products as second products. Induces dermonecrosis, hemolysis, increased vascular permeability, edema, inflammatory response, and platelet aggregation. The sequence is that of Dermonecrotic toxin LspiSicTox-betaIII2 from Loxosceles spinulosa (Recluse spider).